The following is a 230-amino-acid chain: Potassium/proton antiporter CemA (230 aa).

4 helical membrane-spanning segments follow: residues 7 to 27 (LPSF…SFSF), 106 to 126 (IILH…SFFL), 145 to 165 (LNDS…VGFH), and 181 to 201 (LGWA…PVIL).

The protein belongs to the CemA family.

The protein resides in the plastid. It is found in the chloroplast inner membrane. The catalysed reaction is K(+)(in) + H(+)(out) = K(+)(out) + H(+)(in). Its function is as follows. Contributes to K(+)/H(+) antiport activity by supporting proton efflux to control proton extrusion and homeostasis in chloroplasts in a light-dependent manner to modulate photosynthesis. Prevents excessive induction of non-photochemical quenching (NPQ) under continuous-light conditions. Indirectly promotes efficient inorganic carbon uptake into chloroplasts. In Zea mays (Maize), this protein is Potassium/proton antiporter CemA.